Consider the following 858-residue polypeptide: Heat shock protein 105 kDa (858 aa).

Ser2 bears the N-acetylserine mark. Lys471 carries the post-translational modification N6-acetyllysine. Disordered regions lie at residues 500 to 584 (KVPT…PPEA) and 796 to 858 (CEPV…MDLD). Residues 504–514 (EENEMSSEADM) show a composition bias toward acidic residues. Phosphoserine is present on residues Ser509 and Ser510. The segment covering 532 to 554 (QQDNSEAGTQPQVQTDAQQTSQS) has biased composition (polar residues). Ser557 is modified (phosphoserine). At Thr561 the chain carries Phosphothreonine. Composition is skewed to basic and acidic residues over residues 563–584 (EENK…PPEA) and 805–814 (PKIESPKLER). Phosphoserine is present on Ser809. A Phosphothreonine modification is found at Thr815. The span at 821-832 (IDKKEEDLEDKN) shows a compositional bias: basic and acidic residues. A compositionally biased stretch (polar residues) spans 849–858 (EKNSVNMDLD).

This sequence belongs to the heat shock protein 70 family. As to quaternary structure, interacts with HSPA8/HSC70. Interacts with HSPA1A (via NBD) and HSPA1B (via NBD). Phosphorylation on Ser-509 may be important for regulation of the HSPA8/HSC70 chaperone activity. In terms of tissue distribution, highly expressed in testis. Present at lower levels in most brain regions, except cerebellum. Overexpressed in cancer cells.

Its subcellular location is the cytoplasm. Acts as a nucleotide-exchange factor (NEF) for chaperone proteins HSPA1A and HSPA1B, promoting the release of ADP from HSPA1A/B thereby triggering client/substrate protein release. Prevents the aggregation of denatured proteins in cells under severe stress, on which the ATP levels decrease markedly. Inhibits HSPA8/HSC70 ATPase and chaperone activities. The chain is Heat shock protein 105 kDa (HSPH1) from Homo sapiens (Human).